The sequence spans 119 residues: Nucleoid-associated protein Cphy_0047 (119 aa).

The interval 23–45 (AQRMQKQMEDKTKEMEEKQWEAT) is disordered. A compositionally biased stretch (basic and acidic residues) spans 28–42 (KQMEDKTKEMEEKQW).

Belongs to the YbaB/EbfC family. As to quaternary structure, homodimer.

Its subcellular location is the cytoplasm. The protein localises to the nucleoid. Binds to DNA and alters its conformation. May be involved in regulation of gene expression, nucleoid organization and DNA protection. This chain is Nucleoid-associated protein Cphy_0047, found in Lachnoclostridium phytofermentans (strain ATCC 700394 / DSM 18823 / ISDg) (Clostridium phytofermentans).